Reading from the N-terminus, the 179-residue chain is Repressor of phase 1 flagellin gene (179 aa).

Transcriptional repressor of the FliC phase-1 flagellin. The chain is Repressor of phase 1 flagellin gene (fljA) from Salmonella abony.